We begin with the raw amino-acid sequence, 24 residues long: Coenzyme PQQ synthesis protein A (24 aa).

The pyrroloquinoline quinone (Glu-Tyr) cross-link spans 16–20; sequence EVTMY.

Belongs to the PqqA family.

Its pathway is cofactor biosynthesis; pyrroloquinoline quinone biosynthesis. Required for coenzyme pyrroloquinoline quinone (PQQ) biosynthesis. PQQ is probably formed by cross-linking a specific glutamate to a specific tyrosine residue and excising these residues from the peptide. This chain is Coenzyme PQQ synthesis protein A, found in Methylococcus capsulatus (strain ATCC 33009 / NCIMB 11132 / Bath).